A 526-amino-acid chain; its full sequence is Cytochrome P450 monooxygenase 58 (526 aa).

Transmembrane regions (helical) follow at residues 13–33, 115–135, and 306–326; these read IASS…LLLI, FIMA…GYGK, and IGAG…AMTL. Position 451 (Cys-451) interacts with heme.

This sequence belongs to the cytochrome P450 family. Heme serves as cofactor.

It is found in the membrane. It participates in secondary metabolite biosynthesis. Cytochrome P450 monooxygenase that is able to use delta(6)-protoilludene as a substrate to produce delta(6)-protoilludene-8-ol. In Postia placenta (strain ATCC 44394 / Madison 698-R) (Brown rot fungus), this protein is Cytochrome P450 monooxygenase 58.